The primary structure comprises 630 residues: SHC-transforming protein 4 (630 aa).

A CH2 region spans residues 1–185 (MRERGQDSLA…RQDRHFLQHL (185 aa)). 2 disordered regions span residues 39 to 80 (TSLD…QESP) and 118 to 150 (KLQE…QQDL). Low complexity predominate over residues 125 to 142 (PGSSGPSSPETSLSRSGT). The region spanning 186–369 (LGMGMNYCVR…VHIDSHAEER (184 aa)) is the PID domain. The CH1 stretch occupies residues 370–525 (EDHEYYNEIP…HIKQQLWSEE (156 aa)). A Phosphotyrosine modification is found at Y424. 2 stretches are compositionally biased toward polar residues: residues 471-486 (LQST…SAQP) and 502-513 (PGATAQPASSHS). The interval 471-514 (LQSTPGSAGNQRSAQPLGSPWHCGKAPETVQPGATAQPASSHSL) is disordered. Residues 526-617 (CYHGKLSRKA…GSEVSLKQPV (92 aa)) form the SH2 domain.

Interacts (via PID domain) with phosphorylated MUSK (via NPXY motif); undergoes tyrosine phosphorylation downstream of activated MUSK. Interacts with GRB2; the interaction is dependent of Tyr-424 phosphorylation and increased by EGF. In terms of processing, phosphorylated; the phosphorylation is enhanced by EGF. Phosphorylation at Tyr-424 is required for the interaction with GRB2. In terms of tissue distribution, only expressed in melanomas. Weakly expressed in normal melanocytes and benign nevi. Highly expressed at the transition from radial growth phase to vertical growth phase and metastatic melanomas, when tumor cells acquire migratory competence and invasive potential.

It localises to the postsynaptic cell membrane. Activates both Ras-dependent and Ras-independent migratory pathways in melanomas. Contributes to the early phases of agrin-induced tyrosine phosphorylation of CHRNB1. This is SHC-transforming protein 4 (SHC4) from Homo sapiens (Human).